Reading from the N-terminus, the 231-residue chain is Ribosomal RNA small subunit methyltransferase G (231 aa).

S-adenosyl-L-methionine is bound by residues Gly-92, Leu-97, 143–144 (VE), and Arg-162.

This sequence belongs to the methyltransferase superfamily. RNA methyltransferase RsmG family.

The protein resides in the cytoplasm. It carries out the reaction guanosine(527) in 16S rRNA + S-adenosyl-L-methionine = N(7)-methylguanosine(527) in 16S rRNA + S-adenosyl-L-homocysteine. Functionally, specifically methylates the N7 position of guanine in position 527 of 16S rRNA. This Burkholderia thailandensis (strain ATCC 700388 / DSM 13276 / CCUG 48851 / CIP 106301 / E264) protein is Ribosomal RNA small subunit methyltransferase G.